Consider the following 129-residue polypeptide: NHP2-like protein 1 homolog (129 aa).

This sequence belongs to the eukaryotic ribosomal protein eL8 family.

Its subcellular location is the nucleus. It is found in the nucleolus. Binds to the 5'-stem-loop of U4 snRNA and may play a role in the late stage of spliceosome assembly. The protein undergoes a conformational change upon RNA-binding. This is NHP2-like protein 1 homolog from Dictyostelium discoideum (Social amoeba).